The chain runs to 589 residues: Zinc finger protein 703 (589 aa).

The interval 102 to 315 (SQIGKPDPPP…GTGHIAPVSP (214 aa)) is disordered. The span at 113–122 (SKLGSLSSSS) shows a compositional bias: low complexity. A compositionally biased stretch (basic and acidic residues) spans 137-148 (SGEHQNLDDKSS). A compositionally biased stretch (polar residues) spans 179–188 (NGSSSSVTCT). A compositionally biased stretch (low complexity) spans 196 to 206 (SPRASSPQQTS). The segment covering 214-230 (QSQSPLSQKTAHLQTTH) has biased composition (polar residues). Residues 237-250 (GSDPGNDSSSSGSD) are compositionally biased toward low complexity. Residues 251–262 (RNGKKDSDHNKS) show a composition bias toward basic and acidic residues. Low complexity predominate over residues 272 to 299 (SSHARASVNSSSASSSSSPQPDSKTDSQ). Positions 408-460 (VHDPSSALKSGFPLMYPTHHLHSLHPSSLSSSATSSLSHPLYTYGFMLPNETL) are required for interaction with Groucho and hdac2 plays an important role in repression of transcription. The C2H2-type zinc-finger motif lies at 462–490 (HACNWVSVGGPCDKRFATSEELLAHLRTH). Residues 498-589 (GKLLSGYPSS…LGSASALGYQ (92 aa)) are required for self-association and nuclear localization.

It belongs to the Elbow/Noc family. Self-associates. Interacts with nlz2. May interact with Groucho corepressor proteins.

It localises to the nucleus. It is found in the cytoplasm. Functionally, transcriptional corepressor which does not bind directly to DNA and may regulate transcription through recruitment of histone deacetylases to gene promoters. Required for segmental gene expression during hindbrain development. May regulate cell adhesion, migration and proliferation. The polypeptide is Zinc finger protein 703 (znf703) (Danio rerio (Zebrafish)).